We begin with the raw amino-acid sequence, 245 residues long: Probable phosphatase YcdX (245 aa).

Positions 7, 9, 15, 40, 73, 101, 131, 192, and 194 each coordinate Zn(2+).

The protein belongs to the PHP family. As to quaternary structure, homotrimer. Requires Zn(2+) as cofactor.

This chain is Probable phosphatase YcdX, found in Escherichia coli O17:K52:H18 (strain UMN026 / ExPEC).